An 85-amino-acid polypeptide reads, in one-letter code: Small ribosomal subunit protein uS17 (85 aa).

The protein belongs to the universal ribosomal protein uS17 family. As to quaternary structure, part of the 30S ribosomal subunit.

Its function is as follows. One of the primary rRNA binding proteins, it binds specifically to the 5'-end of 16S ribosomal RNA. The chain is Small ribosomal subunit protein uS17 from Natranaerobius thermophilus (strain ATCC BAA-1301 / DSM 18059 / JW/NM-WN-LF).